A 464-amino-acid chain; its full sequence is Glucan 1,3-beta-glucosidase 3 (464 aa).

It belongs to the glycosyl hydrolase 5 (cellulase A) family.

The catalysed reaction is Successive hydrolysis of beta-D-glucose units from the non-reducing ends of (1-&gt;3)-beta-D-glucans, releasing alpha-glucose.. The protein is Glucan 1,3-beta-glucosidase 3 (exg3) of Schizosaccharomyces pombe (strain 972 / ATCC 24843) (Fission yeast).